The chain runs to 332 residues: Autoinducer 2 import system permease protein LsrD (332 aa).

Helical transmembrane passes span 7–27, 45–65, 70–90, 91–111, 118–138, 162–182, 216–236, 240–260, 261–281, and 288–308; these read YSWE…FGVI, ICIG…GMDI, TIGL…PLPL, AIII…GLII, LVIT…LSGM, FLGI…FWLL, VYAM…SYFG, SDLG…GGAN, IYGG…VGFL, and AGVP…VVVV.

It belongs to the binding-protein-dependent transport system permease family. AraH/RbsC subfamily. The complex is composed of two ATP-binding proteins (LsrA), two transmembrane proteins (LsrC and LsrD) and a solute-binding protein (LsrB).

It is found in the cell inner membrane. Its function is as follows. Part of the ABC transporter complex LsrABCD involved in autoinducer 2 (AI-2) import. Probably responsible for the translocation of the substrate across the membrane. In Salmonella paratyphi A (strain ATCC 9150 / SARB42), this protein is Autoinducer 2 import system permease protein LsrD (lsrD).